A 458-amino-acid chain; its full sequence is UDP-N-acetylmuramate--L-alanine ligase (458 aa).

Gly-118–Thr-124 serves as a coordination point for ATP.

It belongs to the MurCDEF family.

It localises to the cytoplasm. The catalysed reaction is UDP-N-acetyl-alpha-D-muramate + L-alanine + ATP = UDP-N-acetyl-alpha-D-muramoyl-L-alanine + ADP + phosphate + H(+). The protein operates within cell wall biogenesis; peptidoglycan biosynthesis. Cell wall formation. The polypeptide is UDP-N-acetylmuramate--L-alanine ligase (Clostridium acetobutylicum (strain ATCC 824 / DSM 792 / JCM 1419 / IAM 19013 / LMG 5710 / NBRC 13948 / NRRL B-527 / VKM B-1787 / 2291 / W)).